The primary structure comprises 286 residues: Nucleoid occlusion protein (286 aa).

Residues 147 to 166 (EALAQRLGKNQSTVANKLRL) constitute a DNA-binding region (H-T-H motif).

It belongs to the ParB family.

It is found in the cytoplasm. It localises to the nucleoid. In terms of biological role, effects nucleoid occlusion by binding relatively nonspecifically to DNA and preventing the assembly of the division machinery in the vicinity of the nucleoid, especially under conditions that disturb the cell cycle. It helps to coordinate cell division and chromosome segregation by preventing the formation of the Z ring through the nucleoid, which would cause chromosome breakage. This chain is Nucleoid occlusion protein, found in Oceanobacillus iheyensis (strain DSM 14371 / CIP 107618 / JCM 11309 / KCTC 3954 / HTE831).